Reading from the N-terminus, the 415-residue chain is Cyclin-A2 (415 aa).

Belongs to the cyclin family. Cyclin AB subfamily. As to quaternary structure, interacts with the CDK1 and CDK2 protein kinases to form serine/threonine kinase holoenzyme complexes. Ubiquitous.

It localises to the nucleus. The protein resides in the cytoplasm. In terms of biological role, cyclin which controls both the G1/S and the G2/M transition phases of the cell cycle. Functions through the formation of specific serine/threonine kinase holoenzyme complexes with the cyclin-dependent protein kinases CDK1 and CDK2. The cyclin subunit confers the substrate specificity of these complexes and differentially interacts with and activates CDK1 and CDK2 throughout the cell cycle. The protein is Cyclin-A2 (ccna2) of Xenopus laevis (African clawed frog).